Reading from the N-terminus, the 201-residue chain is Methylated-DNA--protein-cysteine methyltransferase (201 aa).

DNA contacts are provided by Y131, G132, and R146. The active-site Nucleophile; methyl group acceptor is the C163.

This sequence belongs to the MGMT family.

It localises to the nucleus. It catalyses the reaction a 6-O-methyl-2'-deoxyguanosine in DNA + L-cysteinyl-[protein] = S-methyl-L-cysteinyl-[protein] + a 2'-deoxyguanosine in DNA. The catalysed reaction is a 4-O-methyl-thymidine in DNA + L-cysteinyl-[protein] = a thymidine in DNA + S-methyl-L-cysteinyl-[protein]. Its function is as follows. Involved in the cellular defense against the biological effects of O6-methylguanine (O6-MeG) and O4-methylthymine (O4-MeT) in DNA. Repairs the methylated nucleobase in DNA by stoichiometrically transferring the methyl group to a cysteine residue in the enzyme. This is a suicide reaction: the enzyme is irreversibly inactivated. The chain is Methylated-DNA--protein-cysteine methyltransferase (MGT1) from Lodderomyces elongisporus (strain ATCC 11503 / CBS 2605 / JCM 1781 / NBRC 1676 / NRRL YB-4239) (Yeast).